Reading from the N-terminus, the 100-residue chain is Urease subunit gamma 2 (100 aa).

The protein belongs to the urease gamma subunit family. Heterotrimer of UreA (gamma), UreB (beta) and UreC (alpha) subunits. Three heterotrimers associate to form the active enzyme.

Its subcellular location is the cytoplasm. It carries out the reaction urea + 2 H2O + H(+) = hydrogencarbonate + 2 NH4(+). It participates in nitrogen metabolism; urea degradation; CO(2) and NH(3) from urea (urease route): step 1/1. The polypeptide is Urease subunit gamma 2 (Psychrobacter cryohalolentis (strain ATCC BAA-1226 / DSM 17306 / VKM B-2378 / K5)).